A 258-amino-acid polypeptide reads, in one-letter code: Imidazole glycerol phosphate synthase subunit HisF (258 aa).

Residues Asp11 and Asp130 contribute to the active site.

It belongs to the HisA/HisF family. As to quaternary structure, heterodimer of HisH and HisF.

It is found in the cytoplasm. The enzyme catalyses 5-[(5-phospho-1-deoxy-D-ribulos-1-ylimino)methylamino]-1-(5-phospho-beta-D-ribosyl)imidazole-4-carboxamide + L-glutamine = D-erythro-1-(imidazol-4-yl)glycerol 3-phosphate + 5-amino-1-(5-phospho-beta-D-ribosyl)imidazole-4-carboxamide + L-glutamate + H(+). Its pathway is amino-acid biosynthesis; L-histidine biosynthesis; L-histidine from 5-phospho-alpha-D-ribose 1-diphosphate: step 5/9. In terms of biological role, IGPS catalyzes the conversion of PRFAR and glutamine to IGP, AICAR and glutamate. The HisF subunit catalyzes the cyclization activity that produces IGP and AICAR from PRFAR using the ammonia provided by the HisH subunit. This is Imidazole glycerol phosphate synthase subunit HisF from Escherichia coli O6:K15:H31 (strain 536 / UPEC).